Here is a 113-residue protein sequence, read N- to C-terminus: Putative hemolysin E-like protein (113 aa).

This sequence belongs to the hemolysin E family.

The sequence is that of Putative hemolysin E-like protein from Shigella flexneri.